A 179-amino-acid chain; its full sequence is Small capsomere-interacting protein (179 aa).

Residues 107 to 179 are disordered; it reads IPLPPETGEF…QAPGTKGKKQ (73 aa). Over residues 118–171 the composition is skewed to low complexity; the sequence is TGGTSSSVRSASGASGGAASTAASGGSASAAASGASGGSASQSDVSSRSRSQQA.

This sequence belongs to the herpesviridae small capsomere-interacting protein family. As to quaternary structure, interacts with the major capsid protein/MCP.

It localises to the virion. The protein localises to the host nucleus. Its function is as follows. Participates in the assembly of the infectious particles by decorating the outer surface of the capsid shell and thus forming a layer between the capsid and the tegument. Complexes composed of the major capsid protein and small capsomere-interacting protein/SCP assemble together in the host cytoplasm and are translocated to the nucleus, where they accumulate and participate in capsid assembly. This Equine herpesvirus 2 (strain 86/87) (EHV-2) protein is Small capsomere-interacting protein.